The primary structure comprises 225 residues: Phosphoserine phosphatase (225 aa).

Met1 carries the N-acetylmethionine modification. Asp20 (nucleophile) is an active-site residue. Mg(2+)-binding residues include Asp20 and Asp22. 20–22 (DVD) lines the L-serine pocket. Asp22 (proton donor) is an active-site residue. An O-phospho-L-serine-binding site is contributed by Met52. Gly53 serves as a coordination point for phosphate. L-serine-binding positions include 109–111 (SGG) and Lys158. Residues 109-111 (SGG) and Lys158 contribute to the O-phospho-L-serine site. Asp179 lines the Mg(2+) pocket. Thr182 is an O-phospho-L-serine binding site. Phosphate is bound at residue Thr182.

Belongs to the HAD-like hydrolase superfamily. SerB family. Homodimer. The cofactor is Mg(2+).

It is found in the cytoplasm. Its subcellular location is the cytosol. The catalysed reaction is O-phospho-L-serine + H2O = L-serine + phosphate. The enzyme catalyses O-phospho-D-serine + H2O = D-serine + phosphate. It participates in amino-acid biosynthesis; L-serine biosynthesis; L-serine from 3-phospho-D-glycerate: step 3/3. Its function is as follows. Catalyzes the last irreversible step in the biosynthesis of L-serine from carbohydrates, the dephosphorylation of O-phospho-L-serine to L-serine. L-serine can then be used in protein synthesis, to produce other amino acids, in nucleotide metabolism or in glutathione synthesis, or can be racemized to D-serine, a neuromodulator. May also act on O-phospho-D-serine. This is Phosphoserine phosphatase from Mus musculus (Mouse).